A 492-amino-acid chain; its full sequence is Ferruginol synthase (492 aa).

A helical membrane pass occupies residues 1-21 (METIALLAALFFIALTCFLTS). Residues 22-492 (GRRRNLPPGP…VPLKIIPLRP (471 aa)) lie on the Cytoplasmic side of the membrane. Cysteine 436 serves as a coordination point for heme.

It belongs to the cytochrome P450 family. Heme is required as a cofactor.

Its subcellular location is the endoplasmic reticulum membrane. The enzyme catalyses abieta-8,11,13-triene + reduced [NADPH--hemoprotein reductase] + O2 = ferruginol + oxidized [NADPH--hemoprotein reductase] + H2O + H(+). It participates in secondary metabolite biosynthesis; terpenoid biosynthesis. Cytochrome P450 enzyme (CYP) which catalyzes a unique two-electron oxidation cascade on abieta-8,11,13-triene to produce ferruginol, an intermediate in tanshinone biosynthesis. The sequence is that of Ferruginol synthase from Isodon rubescens (Rabdosia rubescens).